A 123-amino-acid chain; its full sequence is Holo-[acyl-carrier-protein] synthase (123 aa).

Mg(2+) is bound by residues D8 and E60.

Belongs to the P-Pant transferase superfamily. AcpS family. It depends on Mg(2+) as a cofactor.

It localises to the cytoplasm. The enzyme catalyses apo-[ACP] + CoA = holo-[ACP] + adenosine 3',5'-bisphosphate + H(+). Transfers the 4'-phosphopantetheine moiety from coenzyme A to a Ser of acyl-carrier-protein. The polypeptide is Holo-[acyl-carrier-protein] synthase (Wolbachia pipientis wMel).